Consider the following 463-residue polypeptide: Membrane-bound lytic murein transglycosylase F (463 aa).

Positions 1–33 are cleaved as a signal peptide; that stretch reads MQSQDYKKRLKLQIIIILSIAVMSCGVPNVPTA. Positions 34 to 272 are non-LT domain; sequence LSSLLERESI…VLEDKYFGHI (239 aa). The segment at 273–463 is LT domain; that stretch reads RQFDYVDSRA…LVWLDEQGKI (191 aa). E317 is an active-site residue.

The protein in the N-terminal section; belongs to the bacterial solute-binding protein 3 family. In the C-terminal section; belongs to the transglycosylase Slt family.

It localises to the cell outer membrane. The enzyme catalyses Exolytic cleavage of the (1-&gt;4)-beta-glycosidic linkage between N-acetylmuramic acid (MurNAc) and N-acetylglucosamine (GlcNAc) residues in peptidoglycan, from either the reducing or the non-reducing ends of the peptidoglycan chains, with concomitant formation of a 1,6-anhydrobond in the MurNAc residue.. Functionally, murein-degrading enzyme that degrades murein glycan strands and insoluble, high-molecular weight murein sacculi, with the concomitant formation of a 1,6-anhydromuramoyl product. Lytic transglycosylases (LTs) play an integral role in the metabolism of the peptidoglycan (PG) sacculus. Their lytic action creates space within the PG sacculus to allow for its expansion as well as for the insertion of various structures such as secretion systems and flagella. This chain is Membrane-bound lytic murein transglycosylase F, found in Alteromonas mediterranea (strain DSM 17117 / CIP 110805 / LMG 28347 / Deep ecotype).